A 264-amino-acid chain; its full sequence is MHPYLDLMRHVLQYGHKKTDRTGTGTLSIFGYQMRFDLQQGFPLVTTKQCHVKSIIHELLWFLRGDTNIDYLKKNGISIWNEWADKSGELGPVYGHQWRSWTVSGDKSIDQIAQVIQQIKATPDSRRMIISAWNVGDLDKMALAPCHVLFQFYVVDGKLSCQLYQRSADIFLGVPFNIASYSLLTLMIAQCCNLKPGEFIHTFGDAHLYLNHLEQARLQLTREPKSLPIMELNPAIRNILDFRYEDFTLHNYDPHPPIKAPVAV.

Residue Arg21 participates in dUMP binding. (6R)-5,10-methylene-5,6,7,8-tetrahydrofolate is bound at residue His51. 126–127 (RR) contacts dUMP. Residue Cys146 is the Nucleophile of the active site. Residues 166–169 (RSAD), Asn177, and 207–209 (HLY) contribute to the dUMP site. Position 169 (Asp169) interacts with (6R)-5,10-methylene-5,6,7,8-tetrahydrofolate. Ala263 is a binding site for (6R)-5,10-methylene-5,6,7,8-tetrahydrofolate.

It belongs to the thymidylate synthase family. Bacterial-type ThyA subfamily. In terms of assembly, homodimer.

Its subcellular location is the cytoplasm. It catalyses the reaction dUMP + (6R)-5,10-methylene-5,6,7,8-tetrahydrofolate = 7,8-dihydrofolate + dTMP. The protein operates within pyrimidine metabolism; dTTP biosynthesis. In terms of biological role, catalyzes the reductive methylation of 2'-deoxyuridine-5'-monophosphate (dUMP) to 2'-deoxythymidine-5'-monophosphate (dTMP) while utilizing 5,10-methylenetetrahydrofolate (mTHF) as the methyl donor and reductant in the reaction, yielding dihydrofolate (DHF) as a by-product. This enzymatic reaction provides an intracellular de novo source of dTMP, an essential precursor for DNA biosynthesis. The chain is Thymidylate synthase from Nitrosomonas eutropha (strain DSM 101675 / C91 / Nm57).